A 373-amino-acid polypeptide reads, in one-letter code: MAQESPKNSAAEIPVTSNGEVDDAHEHGYNRDLKHSLPSGLGLSETQITSHGFDSTKEGVTEAGAPQGSSAPPLPCVLSPSRVAASKLTQQAGDLTVPAGGQRTHTKGGPVILADEIKNPAMEKLELVRKWSLNTYKCTRQIISEKLGRGSRTVDLELEAQIDILRDNKKKYENILKLAQTLSTQLFQMVHTQKQLGDAFADLSLKSLELHEEFGYNADTQKLLAKNGETLLGAINFFIASVNTLVNKTIEDTLMTVKQYENARVEYDAYRTDLEELNLGPRDANTLPKIEQSQHLFQIHKEKYDKMRSDVSVKLKFLEENKVKVLRNQLVLFHSAVAAYFAGNQKQLELTLKQFHVRLKTPGVDAPSWLEEQ.

The disordered stretch occupies residues 1-47 (MAQESPKNSAAEIPVTSNGEVDDAHEHGYNRDLKHSLPSGLGLSETQ). A2 is subject to N-acetylalanine. S5 is modified (phosphoserine). The segment covering 22–35 (DDAHEHGYNRDLKH) has biased composition (basic and acidic residues). Residues S36, S39, S69, S79, and S132 each carry the phosphoserine modification. The AH domain occupies 153–353 (TVDLELEAQI…NQKQLELTLK (201 aa)). Phosphothreonine is present on T361.

Forms homodimers or heterodimers with ARFIP2. Interacts with non-myristoylated GTP-bound ARF3, but not to GDP-bound ARF3. Interacts with ARF1. Binds with lower affinity to ARF5 and with very little affinity to ARF6. Interacts with ARL1. Interacts with ATG9A. In terms of processing, phosphorylated by PRKD1; phosphorylation delocalizes ARFIP1 from the Golgi and disrupts its ability to inhibit the activity of ADP-ribosylation factor, an important component of the vesicle scission machinery.

It localises to the golgi apparatus. Its subcellular location is the trans-Golgi network membrane. In terms of biological role, plays a role in controlling biogenesis of secretory granules at the trans-Golgi network. Mechanistically, binds ARF-GTP at the neck of a growing secretory granule precursor and forms a protective scaffold. Once the granule precursor has been completely loaded, active PRKD1 phosphorylates ARFIP1 and releases it from ARFs. In turn, ARFs induce fission. Through this mechanism, ensures proper secretory granule formation at the Golgi of pancreatic beta cells. This is Arfaptin-1 from Mus musculus (Mouse).